The chain runs to 214 residues: Homeobox protein HEX homolog pha-2 (214 aa).

Disordered regions lie at residues M1 to E50 and R180 to G214. The span at S24–E34 shows a compositional bias: low complexity. Residues C35 to T44 are compositionally biased toward polar residues. The segment at residues R124–R183 is a DNA-binding region (homeobox). The segment covering S200–G214 has biased composition (polar residues).

It is found in the nucleus. In terms of biological role, transcriptional repressor. Involved in pharyngeal development and required for the formation of the pharyngeal isthmus. Plays a role in modulating cytoskeleton in the muscle cells of the isthmus. Regulates expression of the acetylcholinesterase genes ace-1 and ace-2. May regulate its own expression. The chain is Homeobox protein HEX homolog pha-2 from Caenorhabditis elegans.